Here is a 35-residue protein sequence, read N- to C-terminus: Mu-theraphotoxin-Hd1a (35 aa).

3 cysteine pairs are disulfide-bonded: Cys-2–Cys-17, Cys-9–Cys-24, and Cys-16–Cys-31.

Belongs to the neurotoxin 10 (Hwtx-1) family. 22 (Htx-4) subfamily. In terms of tissue distribution, expressed by the venom gland.

The protein localises to the secreted. Functionally, gating-modifier toxin that reversibly and voltage-independently inhibits human Nav1.1/SCN1A and Nav1.7/SCN9A (IC(50)=111 nM). It also shows moderate inhibition on Nav1.2/SCN2A (1 uM inhibits current by 55%), Nav1.6/SCN8A (31%), Nav1.3/SCN5A (27%) and Nav1.4/SCN4A (23%). This toxin inhibits Nav1.7/SCN9A by interacting with the S3b-S4 paddle motif in channel domain II. In Cyriopagopus doriae (Tarantula spider), this protein is Mu-theraphotoxin-Hd1a.